Reading from the N-terminus, the 120-residue chain is NAD(P)H-quinone oxidoreductase subunit 3, chloroplastic (120 aa).

The next 3 membrane-spanning stretches (helical) occupy residues 9 to 29 (IFWA…IISG), 64 to 84 (MFAL…PWAV), and 88 to 108 (VLGV…VVGS).

This sequence belongs to the complex I subunit 3 family. NDH is composed of at least 16 different subunits, 5 of which are encoded in the nucleus.

The protein localises to the plastid. It localises to the chloroplast thylakoid membrane. The enzyme catalyses a plastoquinone + NADH + (n+1) H(+)(in) = a plastoquinol + NAD(+) + n H(+)(out). It catalyses the reaction a plastoquinone + NADPH + (n+1) H(+)(in) = a plastoquinol + NADP(+) + n H(+)(out). In terms of biological role, NDH shuttles electrons from NAD(P)H:plastoquinone, via FMN and iron-sulfur (Fe-S) centers, to quinones in the photosynthetic chain and possibly in a chloroplast respiratory chain. The immediate electron acceptor for the enzyme in this species is believed to be plastoquinone. Couples the redox reaction to proton translocation, and thus conserves the redox energy in a proton gradient. This is NAD(P)H-quinone oxidoreductase subunit 3, chloroplastic from Nuphar advena (Common spatterdock).